A 683-amino-acid chain; its full sequence is Protein kinase C eta type (683 aa).

In terms of domain architecture, C2 spans 1 to 118 (MSSGTMKFNG…LRTAGTSDTF (118 aa)). Residues S28 and S32 each carry the phosphoserine modification. 2 consecutive Phorbol-ester/DAG-type zinc fingers follow at residues 171-222 (GHKF…VTAC) and 245-295 (PHKF…APNC). The residue at position 317 (S317) is a Phosphoserine. Residues 355–614 (FEFIRVLGKG…EHEILRHPFF (260 aa)) form the Protein kinase domain. Residues 361-369 (LGKGSFGKV) and K384 each bind ATP. Catalysis depends on D479, which acts as the Proton acceptor. T513 carries the phosphothreonine; by PDPK1 modification. Residues 615-683 (KEIDWAQLNH…FSYVSPELQL (69 aa)) form the AGC-kinase C-terminal domain. At T656 the chain carries Phosphothreonine. Phosphoserine is present on S675.

It belongs to the protein kinase superfamily. AGC Ser/Thr protein kinase family. PKC subfamily. As to quaternary structure, interacts with FYN. Interacts with RALA. Interacts with DGKQ. Predominantly expressed in lung and skin.

Its subcellular location is the cytoplasm. The catalysed reaction is L-seryl-[protein] + ATP = O-phospho-L-seryl-[protein] + ADP + H(+). It carries out the reaction L-threonyl-[protein] + ATP = O-phospho-L-threonyl-[protein] + ADP + H(+). Novel PKCs (PRKCD, PRKCE, PRKCH and PRKCQ) are calcium-insensitive, but activated by diacylglycerol (DAG) and phosphatidylserine. Three specific sites; Thr-513 (activation loop of the kinase domain), Thr-656 (turn motif) and Ser-675 (hydrophobic region), need to be phosphorylated for its full activation. In terms of biological role, calcium-independent, phospholipid- and diacylglycerol (DAG)-dependent serine/threonine-protein kinase that is involved in the regulation of cell differentiation in keratinocytes and pre-B cell receptor, mediates regulation of epithelial tight junction integrity and foam cell formation, and is required for glioblastoma proliferation and apoptosis prevention in MCF-7 cells. In keratinocytes, binds and activates the tyrosine kinase FYN, which in turn blocks epidermal growth factor receptor (EGFR) signaling and leads to keratinocyte growth arrest and differentiation. Associates with the cyclin CCNE1-CDK2-CDKN1B complex and inhibits CDK2 kinase activity, leading to RB1 dephosphorylation and thereby G1 arrest in keratinocytes. In association with RALA activates actin depolymerization, which is necessary for keratinocyte differentiation. In the pre-B cell receptor signaling, functions downstream of BLNK by up-regulating IRF4, which in turn activates L chain gene rearrangement. Regulates epithelial tight junctions (TJs) by phosphorylating occludin (OCLN) on threonine residues, which is necessary for the assembly and maintenance of TJs. In association with PLD2 and via TLR4 signaling, is involved in lipopolysaccharide (LPS)-induced RGS2 down-regulation and foam cell formation. Upon PMA stimulation, mediates glioblastoma cell proliferation by activating the mTOR pathway, the PI3K/AKT pathway and the ERK1-dependent phosphorylation of ELK1. Involved in the protection of glioblastoma cells from irradiation-induced apoptosis by preventing caspase-9 activation. In camptothecin-treated MCF-7 cells, regulates NF-kappa-B upstream signaling by activating IKBKB, and confers protection against DNA damage-induced apoptosis. Promotes oncogenic functions of ATF2 in the nucleus while blocking its apoptotic function at mitochondria. Phosphorylates ATF2 which promotes its nuclear retention and transcriptional activity and negatively regulates its mitochondrial localization. The chain is Protein kinase C eta type (Prkch) from Mus musculus (Mouse).